The primary structure comprises 801 residues: Phosphatidylinositol 4-phosphate 5-kinase 1 (801 aa).

A signal peptide spans 1–21 (MPGLHVVSFLVVLLLQLRSSG). MORN repeat units lie at residues 41–63 (YVGS…DGAL), 64–86 (YDGE…SGAS), 87–109 (YEGD…DGSV), 110–132 (YKGS…NSDT), 133–155 (YEGF…DGNV), 156–178 (YIGR…NGDT), 182–201 (NWLN…SGAC), and 202–223 (YIGT…PGSK). The PIPK domain occupies 366–797 (GHRSYYLMLN…RFISFLEKVF (432 aa)).

Expressed in young seedlings, shoot and seeds, and at lower level in roots, stem and leaf.

The enzyme catalyses a 1,2-diacyl-sn-glycero-3-phospho-(1D-myo-inositol 4-phosphate) + ATP = a 1,2-diacyl-sn-glycero-3-phospho-(1D-myo-inositol-4,5-bisphosphate) + ADP + H(+). In terms of biological role, involved in flowering. May suppress floral initiation by modifying the expression of genes related to floral induction. This chain is Phosphatidylinositol 4-phosphate 5-kinase 1 (PIPK1), found in Oryza sativa subsp. japonica (Rice).